The sequence spans 348 residues: Neutral peroxidase (348 aa).

Residues 1–20 (MASFVARLTLALSFIALALA) form the signal peptide. A propeptide spanning residues 21 to 67 (GYSLVQNTLSSPTHTRLNLIPTWLDSTFDSADVLSYLGFGKSSGRLS) is cleaved from the precursor. 4 cysteine pairs are disulfide-bonded: cysteine 71–cysteine 149, cysteine 102–cysteine 107, cysteine 156–cysteine 344, and cysteine 235–cysteine 256. Histidine 100 functions as the Proton acceptor in the catalytic mechanism. Residues aspartate 101, valine 104, glycine 106, and aspartate 108 each contribute to the Ca(2+) site. Residues asparagine 114, asparagine 118, asparagine 173, asparagine 177, and asparagine 189 are each glycosylated (N-linked (GlcNAc...) asparagine). Proline 198 serves as a coordination point for substrate. Asparagine 203 carries an N-linked (GlcNAc...) asparagine glycan. Residue histidine 228 participates in heme b binding. Threonine 229 lines the Ca(2+) pocket. N-linked (GlcNAc...) asparagine glycans are attached at residues asparagine 247 and asparagine 261. 3 residues coordinate Ca(2+): aspartate 269, serine 271, and aspartate 276. N-linked (GlcNAc...) asparagine glycosylation is present at asparagine 300.

It belongs to the peroxidase family. Classical plant (class III) peroxidase subfamily. The cofactor is Ca(2+). Heme b is required as a cofactor. Highly expressed in suspension cultured cells. Weak expression also found in the stems of intact plants. No expression in leaf, tuberous root and non-tuberous root.

The protein localises to the secreted. The enzyme catalyses 2 a phenolic donor + H2O2 = 2 a phenolic radical donor + 2 H2O. Functionally, removal of H(2)O(2), oxidation of toxic reductants, biosynthesis and degradation of lignin, suberization, auxin catabolism, response to environmental stresses such as wounding, pathogen attack and oxidative stress. These functions might be dependent on each isozyme/isoform in each plant tissue. Its function is as follows. May contribute to protection against cold-induced oxidative stress. This is Neutral peroxidase from Ipomoea batatas (Sweet potato).